A 99-amino-acid polypeptide reads, in one-letter code: PE family immunomodulator PE35 (99 aa).

The PE domain maps to 1–90; sequence MEKMSHDPIA…DVARTYSQID (90 aa).

Belongs to the mycobacterial PE family. As to quaternary structure, interacts with PPE68. PE35/PPE68 complex interacts with human TLR2.

The protein localises to the secreted. It localises to the cell surface. Its function is as follows. Plays a major role in RD1-associated pathogenesis, and may contribute to the establishment and maintenance of M.tuberculosis infection. Together with PPE68, stimulates the secretion of IL-10 and MCP-1 from human macrophages, via the interaction with human Toll-like receptor 2 (TLR2). This Mycobacterium tuberculosis (strain ATCC 25618 / H37Rv) protein is PE family immunomodulator PE35 (PE35).